Reading from the N-terminus, the 132-residue chain is Small ribosomal subunit protein uS9 (132 aa).

It belongs to the universal ribosomal protein uS9 family.

This is Small ribosomal subunit protein uS9 (rps9) from Thermoplasma volcanium (strain ATCC 51530 / DSM 4299 / JCM 9571 / NBRC 15438 / GSS1).